Here is a 434-residue protein sequence, read N- to C-terminus: Mothers against decapentaplegic homolog 9 (434 aa).

Residues P16–P140 form the MH1 domain. The Zn(2+) site is built by C68, C113, C125, and H130. Positions M171 to H222 are disordered. Residues C202–Q221 show a composition bias toward polar residues. Residues W236–S434 enclose the MH2 domain.

It belongs to the dwarfin/SMAD family. As to quaternary structure, interaction with the co-SMAD SMAD4. Interacts with PEBP2-alpha subunit. Interacts with RANBP3L. Post-translationally, phosphorylated on serine by BMP (bone morphogenetic proteins) type 1 receptor kinase. Phosphorylated by activin type I receptor-like kinase-2 (ALK-2).

It is found in the cytoplasm. Its subcellular location is the nucleus. Its function is as follows. Transcriptional modulator activated by BMP (bone morphogenetic proteins) type 1 receptor kinase. SMAD9 is a receptor-regulated SMAD (R-SMAD). Has been shown to be activated by activin type I receptor-like kinase-2 (ALK-2) which stimulates heteromerization between SMAD9 and SMAD4. ALK-2 binds TGF-beta, activin and BMP. This chain is Mothers against decapentaplegic homolog 9 (Smad9), found in Rattus norvegicus (Rat).